Consider the following 142-residue polypeptide: Transcriptional regulator MraZ (142 aa).

SpoVT-AbrB domains lie at A5–E51 and A77–T120.

Belongs to the MraZ family. As to quaternary structure, forms oligomers.

It localises to the cytoplasm. Its subcellular location is the nucleoid. The protein is Transcriptional regulator MraZ of Variovorax paradoxus (strain S110).